Consider the following 34-residue polypeptide: Photosystem II reaction center protein M (34 aa).

Residues 5-25 (ILAFIATALFILVPTAFLLII) traverse the membrane as a helical segment.

It belongs to the PsbM family. As to quaternary structure, PSII is composed of 1 copy each of membrane proteins PsbA, PsbB, PsbC, PsbD, PsbE, PsbF, PsbH, PsbI, PsbJ, PsbK, PsbL, PsbM, PsbT, PsbX, PsbY, PsbZ, Psb30/Ycf12, at least 3 peripheral proteins of the oxygen-evolving complex and a large number of cofactors. It forms dimeric complexes.

The protein resides in the plastid. It is found in the chloroplast thylakoid membrane. In terms of biological role, one of the components of the core complex of photosystem II (PSII). PSII is a light-driven water:plastoquinone oxidoreductase that uses light energy to abstract electrons from H(2)O, generating O(2) and a proton gradient subsequently used for ATP formation. It consists of a core antenna complex that captures photons, and an electron transfer chain that converts photonic excitation into a charge separation. This subunit is found at the monomer-monomer interface. The polypeptide is Photosystem II reaction center protein M (Ceratophyllum demersum (Rigid hornwort)).